The sequence spans 511 residues: Sodium/hydrogen exchanger 9B1 (511 aa).

The span at 1-10 shows a compositional bias: basic and acidic residues; sequence MHTTESKDEH. Residues 1-41 form a disordered region; the sequence is MHTTESKDEHLEDENFQTSTTPQSLIDPNSTAHEETKTVIS. Residues 16–31 show a composition bias toward polar residues; it reads FQTSTTPQSLIDPNST. 13 helical membrane-spanning segments follow: residues 67–87, 95–115, 116–136, 152–172, 187–207, 215–235, 260–280, 284–304, 337–357, 368–388, 398–418, 431–451, and 472–492; these read IITN…VLGS, LFGL…LQLI, RIPL…GFTI, WSSI…GLGL, LAVG…HFIM, FLLG…SMMV, VLAI…GGIV, IASI…GFFV, IGLH…AGTK, IITN…GAEV, IGIF…VTYI, IFIA…GPLV, and VAFL…GILG.

It belongs to the monovalent cation:proton antiporter 1 (CPA1) transporter (TC 2.A.36) family.

It localises to the cell projection. Its subcellular location is the cilium. The protein resides in the flagellum membrane. Functionally, sperm-specific Na(+)/H(+) exchanger involved in intracellular pH regulation of spermatozoa. Involved in sperm motility and fertility. This chain is Sodium/hydrogen exchanger 9B1 (SLC9B1), found in Macaca fascicularis (Crab-eating macaque).